Reading from the N-terminus, the 590-residue chain is Aspartate--tRNA(Asp/Asn) ligase (590 aa).

Residue E176 coordinates L-aspartate. Residues 200–203 (QLFK) are aspartate. R222 and H451 together coordinate L-aspartate. ATP is bound at residue 222–224 (RDE). ATP is bound at residue E485. R492 contacts L-aspartate. ATP is bound at residue 537–540 (GIDR).

Belongs to the class-II aminoacyl-tRNA synthetase family. Type 1 subfamily. Homodimer.

The protein localises to the cytoplasm. It carries out the reaction tRNA(Asx) + L-aspartate + ATP = L-aspartyl-tRNA(Asx) + AMP + diphosphate. Aspartyl-tRNA synthetase with relaxed tRNA specificity since it is able to aspartylate not only its cognate tRNA(Asp) but also tRNA(Asn). Reaction proceeds in two steps: L-aspartate is first activated by ATP to form Asp-AMP and then transferred to the acceptor end of tRNA(Asp/Asn). The polypeptide is Aspartate--tRNA(Asp/Asn) ligase (Ehrlichia canis (strain Jake)).